Consider the following 259-residue polypeptide: Glycerol-3-phosphate acyltransferase (259 aa).

7 helical membrane-spanning segments follow: residues 11–31, 62–82, 93–112, 124–144, 152–172, 188–208, and 211–231; these read IILASVVGYFLGSISWSIIIV, LVVAFLDALKVIFTSIIAILL, TSYFIPCIFALIGHCFPIYY, LGLLFVVNILYLIIFLIVWFI, VSVASIFSAFFVLIIMWIPYL, FSVAWKNYILFSLLNSFHYWF, and IWASGMLEGNIIVLIGGLILG.

This sequence belongs to the PlsY family. As to quaternary structure, probably interacts with PlsX.

Its subcellular location is the cell membrane. It catalyses the reaction an acyl phosphate + sn-glycerol 3-phosphate = a 1-acyl-sn-glycero-3-phosphate + phosphate. The protein operates within lipid metabolism; phospholipid metabolism. Its function is as follows. Catalyzes the transfer of an acyl group from acyl-phosphate (acyl-PO(4)) to glycerol-3-phosphate (G3P) to form lysophosphatidic acid (LPA). This enzyme utilizes acyl-phosphate as fatty acyl donor, but not acyl-CoA or acyl-ACP. This chain is Glycerol-3-phosphate acyltransferase, found in Mycoplasma capricolum subsp. capricolum (strain California kid / ATCC 27343 / NCTC 10154).